Here is a 333-residue protein sequence, read N- to C-terminus: uncharacterized protein (333 aa).

This is an uncharacterized protein from Caenorhabditis elegans.